Consider the following 1334-residue polypeptide: Rho1 guanine nucleotide exchange factor 1 (1334 aa).

Disordered stretches follow at residues M1–V89, P135–V182, L203–T245, and S381–P402. Low complexity predominate over residues S138 to S149. Residues L150–P164 show a composition bias toward polar residues. The segment covering Q170–D180 has biased composition (low complexity). 3 stretches are compositionally biased toward polar residues: residues V213 to L227, H234 to T245, and S381 to S400. At S381 the chain carries Phosphoserine. Residues K621 to E808 enclose the DH domain. One can recognise a PH domain in the interval Q843 to T973. The region spanning D995 to L1293 is the CNH domain.

It localises to the cytoplasm. Stimulates the exchange of Rho1 and Rho5 GDP-bound form into GTP-bound form. Controls septum formation, cell wall synthesis and localization of F-actin patches. Coordinates actin deposition with cell wall biosynthesis during bipolar growth. This Schizosaccharomyces pombe (strain 972 / ATCC 24843) (Fission yeast) protein is Rho1 guanine nucleotide exchange factor 1 (rgf1).